The sequence spans 365 residues: Chaperone protein DnaJ (365 aa).

The J domain occupies 4-70 (DYYKILGVDR…EKRRIYDQTG (67 aa)). Residues 139–220 (GTEKRIKFRR…CNGTGTIVVD (82 aa)) form a CR-type zinc finger. Zn(2+) is bound by residues cysteine 152, cysteine 155, cysteine 168, cysteine 171, cysteine 194, cysteine 197, cysteine 208, and cysteine 211. CXXCXGXG motif repeat units follow at residues 152-159 (CPDCKGTG), 168-175 (CPTCHGTG), 194-201 (CNTCGGKG), and 208-215 (CPRCNGTG).

It belongs to the DnaJ family. Homodimer. Requires Zn(2+) as cofactor.

Its subcellular location is the cytoplasm. Its function is as follows. Participates actively in the response to hyperosmotic and heat shock by preventing the aggregation of stress-denatured proteins and by disaggregating proteins, also in an autonomous, DnaK-independent fashion. Unfolded proteins bind initially to DnaJ; upon interaction with the DnaJ-bound protein, DnaK hydrolyzes its bound ATP, resulting in the formation of a stable complex. GrpE releases ADP from DnaK; ATP binding to DnaK triggers the release of the substrate protein, thus completing the reaction cycle. Several rounds of ATP-dependent interactions between DnaJ, DnaK and GrpE are required for fully efficient folding. Also involved, together with DnaK and GrpE, in the DNA replication of plasmids through activation of initiation proteins. In Thermoplasma volcanium (strain ATCC 51530 / DSM 4299 / JCM 9571 / NBRC 15438 / GSS1), this protein is Chaperone protein DnaJ.